An 81-amino-acid polypeptide reads, in one-letter code: Xenopsin peptides (81 aa).

A signal peptide spans 1–20 (MYKGIFLCVLLAVICANSLA). Residues 21 to 37 (TPSSDADEDNDEVERYV) constitute a propeptide that is removed on maturation. Residues 65 to 73 (EAMLRSAEA) constitute a propeptide, removed in mature form by a dipeptidylpeptidase.

It belongs to the gastrin/cholecystokinin family. Magainin subfamily. As to expression, XPF is synthesized in the stomach and stored in a novel granular multinucleated cell in the gastric mucosa, it is stored as active, processed peptides in large granules within the granular gland secretions of the skin.

The protein resides in the secreted. Its function is as follows. Xenopsin is a neurotensin-like octapeptide. In terms of biological role, XPF has antimicrobial activity. In Xenopus laevis (African clawed frog), this protein is Xenopsin peptides.